The sequence spans 304 residues: D-tagatose-1-phosphate kinase (304 aa).

The Proton acceptor role is filled by D250.

This sequence belongs to the carbohydrate kinase PfkB family. The cofactor is Mg(2+).

The catalysed reaction is alpha-D-tagatopyranose 1-phosphate + ATP = D-tagatofuranose 1,6-bisphosphate + ADP + H(+). It functions in the pathway carbohydrate degradation. Its function is as follows. Kinase involved in a D-tagatose catabolic pathway. Catalyzes the phosphorylation of D-tagatose-1-phosphate (Tag-1P) to D-tagatose-1,6-bisphosphate. This Klebsiella oxytoca protein is D-tagatose-1-phosphate kinase.